The following is a 383-amino-acid chain: NADH-quinone oxidoreductase subunit D 1 (383 aa).

This sequence belongs to the complex I 49 kDa subunit family. As to quaternary structure, NDH-1 is composed of 14 different subunits. Subunits NuoB, C, D, E, F, and G constitute the peripheral sector of the complex.

It localises to the cell membrane. It catalyses the reaction a quinone + NADH + 5 H(+)(in) = a quinol + NAD(+) + 4 H(+)(out). Functionally, NDH-1 shuttles electrons from NADH, via FMN and iron-sulfur (Fe-S) centers, to quinones in the respiratory chain. The immediate electron acceptor for the enzyme in this species is believed to be a menaquinone. Couples the redox reaction to proton translocation (for every two electrons transferred, four hydrogen ions are translocated across the cytoplasmic membrane), and thus conserves the redox energy in a proton gradient. The chain is NADH-quinone oxidoreductase subunit D 1 from Streptomyces coelicolor (strain ATCC BAA-471 / A3(2) / M145).